Consider the following 500-residue polypeptide: Probable cytosol aminopeptidase (500 aa).

Mn(2+) contacts are provided by lysine 265 and aspartate 270. Lysine 277 is an active-site residue. 3 residues coordinate Mn(2+): aspartate 288, aspartate 347, and glutamate 349. The active site involves arginine 351.

Belongs to the peptidase M17 family. Requires Mn(2+) as cofactor.

The protein resides in the cytoplasm. The enzyme catalyses Release of an N-terminal amino acid, Xaa-|-Yaa-, in which Xaa is preferably Leu, but may be other amino acids including Pro although not Arg or Lys, and Yaa may be Pro. Amino acid amides and methyl esters are also readily hydrolyzed, but rates on arylamides are exceedingly low.. It catalyses the reaction Release of an N-terminal amino acid, preferentially leucine, but not glutamic or aspartic acids.. Functionally, presumably involved in the processing and regular turnover of intracellular proteins. Catalyzes the removal of unsubstituted N-terminal amino acids from various peptides. This Bdellovibrio bacteriovorus (strain ATCC 15356 / DSM 50701 / NCIMB 9529 / HD100) protein is Probable cytosol aminopeptidase.